A 253-amino-acid chain; its full sequence is Trans-aconitate 2-methyltransferase (253 aa).

It belongs to the methyltransferase superfamily. Tam family.

It localises to the cytoplasm. The catalysed reaction is trans-aconitate + S-adenosyl-L-methionine = (E)-3-(methoxycarbonyl)pent-2-enedioate + S-adenosyl-L-homocysteine. Functionally, catalyzes the S-adenosylmethionine monomethyl esterification of trans-aconitate. The sequence is that of Trans-aconitate 2-methyltransferase from Azoarcus sp. (strain BH72).